We begin with the raw amino-acid sequence, 151 residues long: Large ribosomal subunit protein uL13 (151 aa).

It belongs to the universal ribosomal protein uL13 family. Part of the 50S ribosomal subunit.

In terms of biological role, this protein is one of the early assembly proteins of the 50S ribosomal subunit, although it is not seen to bind rRNA by itself. It is important during the early stages of 50S assembly. In Synechococcus elongatus (strain ATCC 33912 / PCC 7942 / FACHB-805) (Anacystis nidulans R2), this protein is Large ribosomal subunit protein uL13.